A 98-amino-acid polypeptide reads, in one-letter code: Citrate lyase acyl carrier protein (98 aa).

Serine 14 is subject to O-(phosphoribosyl dephospho-coenzyme A)serine.

This sequence belongs to the CitD family. As to quaternary structure, oligomer with a subunit composition of (alpha,beta,gamma)6.

The protein resides in the cytoplasm. Functionally, covalent carrier of the coenzyme of citrate lyase. This is Citrate lyase acyl carrier protein from Shigella flexneri.